The sequence spans 530 residues: NADH-quinone oxidoreductase subunit C/D (530 aa).

The segment at 1–144 (MQEIQFIVPA…NPLCMANEET (144 aa)) is NADH dehydrogenase I subunit C. The interval 171 to 530 (EYVVNIGPQH…LDYVVPDIDR (360 aa)) is NADH dehydrogenase I subunit D.

In the N-terminal section; belongs to the complex I 30 kDa subunit family. It in the C-terminal section; belongs to the complex I 49 kDa subunit family. As to quaternary structure, NDH-1 is composed of 13 different subunits. Subunits NuoB, CD, E, F, and G constitute the peripheral sector of the complex.

It is found in the cell inner membrane. The enzyme catalyses a quinone + NADH + 5 H(+)(in) = a quinol + NAD(+) + 4 H(+)(out). NDH-1 shuttles electrons from NADH, via FMN and iron-sulfur (Fe-S) centers, to quinones in the respiratory chain. The immediate electron acceptor for the enzyme in this species is believed to be a menaquinone. Couples the redox reaction to proton translocation (for every two electrons transferred, four hydrogen ions are translocated across the cytoplasmic membrane), and thus conserves the redox energy in a proton gradient. This is NADH-quinone oxidoreductase subunit C/D from Bacteroides thetaiotaomicron (strain ATCC 29148 / DSM 2079 / JCM 5827 / CCUG 10774 / NCTC 10582 / VPI-5482 / E50).